Consider the following 414-residue polypeptide: DNA polymerase IV (414 aa).

The UmuC domain maps to 8–189 (IFHIDMNSFY…LPIEEMHGIG (182 aa)). Positions 12 and 108 each coordinate Mg(2+). Residue Glu109 is part of the active site. A disordered region spans residues 394–414 (EESKTRGTSFNRDFFQDEKKR).

This sequence belongs to the DNA polymerase type-Y family. In terms of assembly, monomer. Mg(2+) serves as cofactor.

It localises to the cytoplasm. The enzyme catalyses DNA(n) + a 2'-deoxyribonucleoside 5'-triphosphate = DNA(n+1) + diphosphate. Poorly processive, error-prone DNA polymerase involved in untargeted mutagenesis. Copies undamaged DNA at stalled replication forks, which arise in vivo from mismatched or misaligned primer ends. These misaligned primers can be extended by PolIV. Exhibits no 3'-5' exonuclease (proofreading) activity. May be involved in translesional synthesis, in conjunction with the beta clamp from PolIII. The sequence is that of DNA polymerase IV from Bacillus velezensis (strain DSM 23117 / BGSC 10A6 / LMG 26770 / FZB42) (Bacillus amyloliquefaciens subsp. plantarum).